The primary structure comprises 132 residues: Large ribosomal subunit protein uL14 (132 aa).

This sequence belongs to the universal ribosomal protein uL14 family. As to quaternary structure, part of the 50S ribosomal subunit. Forms a cluster with proteins L3 and L24e, part of which may contact the 16S rRNA in 2 intersubunit bridges.

Binds to 23S rRNA. Forms part of two intersubunit bridges in the 70S ribosome. The chain is Large ribosomal subunit protein uL14 from Methanosphaera stadtmanae (strain ATCC 43021 / DSM 3091 / JCM 11832 / MCB-3).